The chain runs to 307 residues: Transcription initiation factor IIB 2 (307 aa).

The TFIIB-type zinc-finger motif lies at 7-38; the sequence is TPKRCPECNSEHLIRDYEHGELICADCGAVIE. Positions 11, 14, 30, and 33 each coordinate Zn(2+). Repeat copies occupy residues 124–207 and 218–299.

The protein belongs to the TFIIB family.

Functionally, stabilizes TBP binding to an archaeal box-A promoter. Also responsible for recruiting RNA polymerase II to the pre-initiation complex (DNA-TBP-TFIIB). The polypeptide is Transcription initiation factor IIB 2 (Thermoplasma acidophilum (strain ATCC 25905 / DSM 1728 / JCM 9062 / NBRC 15155 / AMRC-C165)).